The chain runs to 437 residues: Elongation factor 1-gamma-B (437 aa).

Positions 2–87 (AGGTLYTYPD…YVANDELRGS (86 aa)) constitute a GST N-terminal domain. The GST C-terminal domain occupies 89–222 (NRLHQAQVIQ…KMAQFDAKKF (134 aa)). A compositionally biased stretch (basic and acidic residues) spans 225 to 240 (VQPKKETPKKEKPAKE). The tract at residues 225-279 (VQPKKETPKKEKPAKEPKKKKKKKKKATPAPAPAPEDDLDESEKALAAEPKSKDP) is disordered. A compositionally biased stretch (basic residues) spans 241–251 (PKKKKKKKKKA). Positions 266–279 (SEKALAAEPKSKDP) are enriched in basic and acidic residues. One can recognise an EF-1-gamma C-terminal domain in the interval 276 to 437 (SKDPYAHLPK…KAFNQGKIFK (162 aa)).

EF-1 is composed of four subunits: alpha, beta, delta, and gamma.

Probably plays a role in anchoring the complex to other cellular components. The polypeptide is Elongation factor 1-gamma-B (eef1g-b) (Xenopus laevis (African clawed frog)).